A 186-amino-acid chain; its full sequence is Potassium-transporting ATPase KdpC subunit (186 aa).

Residues 10–30 form a helical membrane-spanning segment; it reads LTIITMVLCGFLFPLAITLIG.

It belongs to the KdpC family. The system is composed of three essential subunits: KdpA, KdpB and KdpC.

It localises to the cell membrane. Its function is as follows. Part of the high-affinity ATP-driven potassium transport (or Kdp) system, which catalyzes the hydrolysis of ATP coupled with the electrogenic transport of potassium into the cytoplasm. This subunit acts as a catalytic chaperone that increases the ATP-binding affinity of the ATP-hydrolyzing subunit KdpB by the formation of a transient KdpB/KdpC/ATP ternary complex. The sequence is that of Potassium-transporting ATPase KdpC subunit from Staphylococcus aureus (strain MSSA476).